Here is a 240-residue protein sequence, read N- to C-terminus: Transcriptional regulatory protein ChvI (240 aa).

In terms of domain architecture, Response regulatory spans 3–116 (TIALVDDDRN…LLVERVKAIL (114 aa)). Residues aspartate 8, aspartate 9, and aspartate 52 each coordinate Mg(2+). Aspartate 52 carries the post-translational modification 4-aspartylphosphate. Positions 139–238 (SRSLERGQLV…LYGVGYRFRE (100 aa)) form a DNA-binding region, ompR/PhoB-type.

The cofactor is Mg(2+). In terms of processing, phosphorylated by ChvG.

Its subcellular location is the cytoplasm. Its pathway is glycan metabolism; exopolysaccharide biosynthesis. Functionally, member of a two-component regulatory system ChvG(ExoS)/ChvI involved in regulating the production of succinoglycan. The sequence is that of Transcriptional regulatory protein ChvI (chvI) from Rhizobium meliloti (strain 1021) (Ensifer meliloti).